Here is a 161-residue protein sequence, read N- to C-terminus: Nucleotide-binding protein Bxeno_A3642 (161 aa).

It belongs to the YajQ family.

Nucleotide-binding protein. This is Nucleotide-binding protein Bxeno_A3642 from Paraburkholderia xenovorans (strain LB400).